The sequence spans 544 residues: MAAKKLVYGDEARAKLKAGVDKLANAVKVTLGPRGREVILEKKWGSPVVTKDGVSVAKEIELTDPYENMAAQLVKEVASKTADVAGDGTTTATVLTQAIYEEGLKAIASGANPIYVKRGIDEAVKIIVEELKKISKPVTGRKEIEQVATISANNDPEIGKIIADAMEKVGKDGVITVEESKSAETVLEVTEGMQFDRGYLSPYFVTNAEKMEAVLENPYILIYEKKVGNIRELLPVLEKVVQTNKPLLIIAEDVEGEALATLVVNHIKGVLRVCAVKAPGFGERRKAMLQDIAILTGGTAITEDLGIKLESVDLDMLGKADKVVVDKDNTTIIGGKGNPEDIKARIEQIKKQIETTTSEYDKEKLQERLAKLAGGVAIIKVGAATEAELKEKKDRVDDAVHATKAAVEEGIVPGGGIAIFRASRALCNIKEENTDKAWGIKIVKNACKVPLKQIAYNAGFEGSVIIEKIKDVDNVNYGFDAATGEYVDMVEAGIIDPTKVVRTALQNAASIAGTMLTAECLVAEIKEKEEKLPGAGGGMGDMDF.

ATP contacts are provided by residues 30-33 (TLGP), lysine 51, 87-91 (DGTTT), glycine 415, 480-482 (DAA), and aspartate 496.

Belongs to the chaperonin (HSP60) family. As to quaternary structure, forms a cylinder of 14 subunits composed of two heptameric rings stacked back-to-back. Interacts with the co-chaperonin GroES.

Its subcellular location is the cytoplasm. The catalysed reaction is ATP + H2O + a folded polypeptide = ADP + phosphate + an unfolded polypeptide.. Together with its co-chaperonin GroES, plays an essential role in assisting protein folding. The GroEL-GroES system forms a nano-cage that allows encapsulation of the non-native substrate proteins and provides a physical environment optimized to promote and accelerate protein folding. The polypeptide is Chaperonin GroEL (Sulfurihydrogenibium sp. (strain YO3AOP1)).